The chain runs to 117 residues: Large ribosomal subunit protein bL20c (117 aa).

The protein belongs to the bacterial ribosomal protein bL20 family.

Its subcellular location is the plastid. The protein localises to the chloroplast. Its function is as follows. Binds directly to 23S ribosomal RNA and is necessary for the in vitro assembly process of the 50S ribosomal subunit. It is not involved in the protein synthesizing functions of that subunit. This chain is Large ribosomal subunit protein bL20c, found in Populus alba (White poplar).